The sequence spans 476 residues: uncharacterized protein (476 aa).

The next 10 helical transmembrane spans lie at 4–24, 81–101, 141–161, 174–194, 207–227, 233–253, 300–320, 351–371, 391–411, and 414–434; these read FFSF…LFGA, ALAI…AAFI, WMGV…FSGV, FDFP…LAIT, FVPL…VMNI, VIWS…GAAG, MIGI…LILL, FVTL…YIYA, ICTF…MWQL, and IIMA…SPVV.

The protein belongs to the alanine or glycine:cation symporter (AGCS) (TC 2.A.25) family.

It is found in the cell inner membrane. This is an uncharacterized protein from Escherichia coli (strain K12).